A 304-amino-acid polypeptide reads, in one-letter code: Ribosomal RNA small subunit methyltransferase H (304 aa).

S-adenosyl-L-methionine is bound by residues glycine 37–histidine 39, aspartate 57, phenylalanine 79, aspartate 100, and histidine 107.

This sequence belongs to the methyltransferase superfamily. RsmH family.

The protein resides in the cytoplasm. The catalysed reaction is cytidine(1402) in 16S rRNA + S-adenosyl-L-methionine = N(4)-methylcytidine(1402) in 16S rRNA + S-adenosyl-L-homocysteine + H(+). Its function is as follows. Specifically methylates the N4 position of cytidine in position 1402 (C1402) of 16S rRNA. This is Ribosomal RNA small subunit methyltransferase H from Phocaeicola vulgatus (strain ATCC 8482 / DSM 1447 / JCM 5826 / CCUG 4940 / NBRC 14291 / NCTC 11154) (Bacteroides vulgatus).